The primary structure comprises 474 residues: MTPRTLFDKVWDAHIVRPQTAETPAVIYIDLHLIHEVTSPQAFTELRQRGLKVRRPDRTLATMDHSTPTTPRGADGIIPVVDAQAAAQLRQLEQNCAEFGIPLFALGSEYQGIVHVIGPEQGLTQPGMTIVCGDSHTSTHGAFGALAFGIGTSEVAHVLATQCLIQTRPKTMEVRVDGRLAPGVTAKDIILAIIARYGVGAGTGHVFEYTGETIRALSMEERMTICNMSIEGGARAGMIAPDDTTFEYIAGRPFAPKGKAWDEAVAYWRTLPTDEGAVYDRIITLDASQLTPMITYGTNPGMGMPIDGRIPTPEELPDPAARQALDKALRYMDLRPGQPLLGHKIDVVFLGSCTNSRISDLRMAARLLKGRKIADGVRMMVVPGSQQVKKQAEAEGLHEIFRAAGAEWREAGCSACLGMNDDKVPPGRYAVSTSNRNFEGRQGPGARTFLASPLTAVASAIEGAVADPRRYLGG.

Residues cysteine 353, cysteine 413, and cysteine 416 each coordinate [4Fe-4S] cluster.

This sequence belongs to the aconitase/IPM isomerase family. LeuC type 1 subfamily. In terms of assembly, heterodimer of LeuC and LeuD. It depends on [4Fe-4S] cluster as a cofactor.

It catalyses the reaction (2R,3S)-3-isopropylmalate = (2S)-2-isopropylmalate. It functions in the pathway amino-acid biosynthesis; L-leucine biosynthesis; L-leucine from 3-methyl-2-oxobutanoate: step 2/4. Functionally, catalyzes the isomerization between 2-isopropylmalate and 3-isopropylmalate, via the formation of 2-isopropylmaleate. This Roseiflexus sp. (strain RS-1) protein is 3-isopropylmalate dehydratase large subunit.